Here is a 270-residue protein sequence, read N- to C-terminus: 2-C-methyl-D-erythritol 4-phosphate cytidylyltransferase (270 aa).

The disordered stretch occupies residues 1-33; the sequence is MSDESRPSPAETPATTFAETSAETSAAGRSPAR. Residues 7–27 are compositionally biased toward low complexity; the sequence is PSPAETPATTFAETSAETSAA.

The protein belongs to the IspD/TarI cytidylyltransferase family. IspD subfamily.

It carries out the reaction 2-C-methyl-D-erythritol 4-phosphate + CTP + H(+) = 4-CDP-2-C-methyl-D-erythritol + diphosphate. The protein operates within isoprenoid biosynthesis; isopentenyl diphosphate biosynthesis via DXP pathway; isopentenyl diphosphate from 1-deoxy-D-xylulose 5-phosphate: step 2/6. Functionally, catalyzes the formation of 4-diphosphocytidyl-2-C-methyl-D-erythritol from CTP and 2-C-methyl-D-erythritol 4-phosphate (MEP). In Streptomyces coelicolor (strain ATCC BAA-471 / A3(2) / M145), this protein is 2-C-methyl-D-erythritol 4-phosphate cytidylyltransferase.